The following is a 345-amino-acid chain: WD40 repeat protein poxJ (345 aa).

WD repeat units lie at residues 15–49, 59–100, 101–146, and 250–284; these read ANPPSDSISELSWSPVANHLAMSSWDQTVRIYDVS, LFNF…EAQQ, VAAH…PLAT, and VNDVSFHPKYYTFSTAGADGTFAFWDKDAHHRLKS.

Belongs to the WD repeat rae1 family.

Its pathway is secondary metabolite biosynthesis. Functionally, WD40 repeat protein; part of the gene cluster that mediates the biosynthesis of oxaleimides, cytotoxic compounds containing an unusual disubstituted succinimide moiety. The first step of the pathway is provided by the HR-PKS poxF that serves in a new mode of collaborative biosynthesis with the PKS-NRPS poxE, by providing the olefin containing amino acid substrate via the synthesis of an ACP-bound dec-4-enoate. The cytochrome P450 monooxygenase poxM-catalyzed oxidation at the alpha-position creates the enzyme-bound 2-hydroxydec-4-enoyl-ACP thioester, which may be prone to spontaneous hydrolysis to yield 2-hydroxydec-4-enoic acid due to increased electrophilicity of the carbonyl. 2-hydroxydec-4-enoic acid can then be further oxidized by poxM to yield the alpha-ketoacid 2-oxodec-4-enoicacid, which is reductively aminated by the aminotransferase poxL to yield (S,E)-2-aminodec-4-enoic acid. The Hybrid PKS-NRPS synthetase poxE then performs condensation between the octaketide product of its PKS modules and the amino group of (S,E)-2-aminodec-4-enoic acid which is activated and incorporated by the adenylation domain. The resulting aminoacyl product can be cyclized by the Diels-Alderase PoxQ and reductively released by the reductive (R) domain of poxE to yield an aldehyde intermediate. The released aldehyde is then substrate for a Knoevenagel condensation by the hydrolyase poxO followed by an oxidation at the 5-position of the pyrrolidone ring. The presence of the olefin from the amino acid building block allows for migration of the substituted allyl group to occur. This allylic transposition reaction takes place in a conjugate addition, semipinacol-like fashion to yield a succinimide intermediate. Iterative two-electron oxidations of the C7 methyl of the succinimide intermediate to the carboxylic acid can be catalyzed by one of two remaining cytochrome P450 monooxygenasess poxC or poxD to yield oxaleimide A. Subsequent oxidation yields the maleimide scaffold oxaleimide I. Both oxaleimide A and oxaleimide I can undergo oxidative modifications in the decalin ring to yield the series of products oxaleimides B to H. This is WD40 repeat protein poxJ from Penicillium oxalicum (strain 114-2 / CGMCC 5302) (Penicillium decumbens).